A 156-amino-acid chain; its full sequence is Lipoprotein signal peptidase (156 aa).

The next 3 helical transmembrane spans lie at 5–25, 64–84, and 89–109; these read FKFI…DQWV, YLHL…KTLL, and IAFG…FIHG. Catalysis depends on residues Asp113 and Asp130. The helical transmembrane segment at 122–142 threads the bilayer; sequence NFAIFNVADVMINISVALILI.

It belongs to the peptidase A8 family.

It is found in the cell inner membrane. The enzyme catalyses Release of signal peptides from bacterial membrane prolipoproteins. Hydrolyzes -Xaa-Yaa-Zaa-|-(S,diacylglyceryl)Cys-, in which Xaa is hydrophobic (preferably Leu), and Yaa (Ala or Ser) and Zaa (Gly or Ala) have small, neutral side chains.. The protein operates within protein modification; lipoprotein biosynthesis (signal peptide cleavage). This protein specifically catalyzes the removal of signal peptides from prolipoproteins. The sequence is that of Lipoprotein signal peptidase from Campylobacter jejuni subsp. jejuni serotype O:23/36 (strain 81-176).